A 193-amino-acid chain; its full sequence is MVGVTLANVLPVCLALLPPPAAGLYYLAELIEEYTVATSRIIKYMIWFSTAVLIGLYVFERFPTYMIGVGLFTNLVYFGLLQTFPFIMLTSPNFILSCGLVVVNHYLAFQFFAEEYYPFSEVLAYFTFCLWIIPFAFFVSLSAGENVLPSTMQPGDDVVSNYFTKGKRGKRLGILVVFSFIKEAILPSRQKIY.

Helical transmembrane passes span 1-21 (MVGVTLANVLPVCLALLPPPA), 39-59 (SRIIKYMIWFSTAVLIGLYVF), 67-87 (IGVGLFTNLVYFGLLQTFPFI), 94-114 (FILSCGLVVVNHYLAFQFFAE), and 122-142 (VLAYFTFCLWIIPFAFFVSLS).

The protein belongs to the SVP26 family.

It localises to the membrane. This Bos taurus (Bovine) protein is Protein TEX261 (TEX261).